A 270-amino-acid polypeptide reads, in one-letter code: Methylthioribulose-1-phosphate dehydratase (270 aa).

Cysteine 122 is a binding site for substrate. Residues histidine 140 and histidine 142 each contribute to the Zn(2+) site. Glutamate 165 acts as the Proton donor/acceptor in catalysis. Histidine 230 serves as a coordination point for Zn(2+).

This sequence belongs to the aldolase class II family. MtnB subfamily. The cofactor is Zn(2+).

Its subcellular location is the cytoplasm. It catalyses the reaction 5-(methylsulfanyl)-D-ribulose 1-phosphate = 5-methylsulfanyl-2,3-dioxopentyl phosphate + H2O. It functions in the pathway amino-acid biosynthesis; L-methionine biosynthesis via salvage pathway; L-methionine from S-methyl-5-thio-alpha-D-ribose 1-phosphate: step 2/6. In terms of biological role, catalyzes the dehydration of methylthioribulose-1-phosphate (MTRu-1-P) into 2,3-diketo-5-methylthiopentyl-1-phosphate (DK-MTP-1-P). The chain is Methylthioribulose-1-phosphate dehydratase from Candida albicans (strain SC5314 / ATCC MYA-2876) (Yeast).